Consider the following 78-residue polypeptide: Probable Fe(2+)-trafficking protein (78 aa).

It belongs to the Fe(2+)-trafficking protein family. As to quaternary structure, monomer.

In terms of biological role, could be a mediator in iron transactions between iron acquisition and iron-requiring processes, such as synthesis and/or repair of Fe-S clusters in biosynthetic enzymes. This Buchnera aphidicola subsp. Schizaphis graminum (strain Sg) protein is Probable Fe(2+)-trafficking protein.